Consider the following 172-residue polypeptide: 3-phenylpropionate/cinnamic acid dioxygenase subunit beta (172 aa).

Belongs to the bacterial ring-hydroxylating dioxygenase beta subunit family. As to quaternary structure, this dioxygenase system consists of four proteins: the two subunits of the hydroxylase component (HcaE and HcaF), a ferredoxin (HcaC) and a ferredoxin reductase (HcaD).

The enzyme catalyses 3-phenylpropanoate + NADH + O2 + H(+) = 3-(cis-5,6-dihydroxycyclohexa-1,3-dien-1-yl)propanoate + NAD(+). The catalysed reaction is (E)-cinnamate + NADH + O2 + H(+) = (2E)-3-(cis-5,6-dihydroxycyclohexa-1,3-dien-1-yl)prop-2-enoate + NAD(+). It participates in aromatic compound metabolism; 3-phenylpropanoate degradation. Part of the multicomponent 3-phenylpropionate dioxygenase. Converts 3-phenylpropionic acid (PP) and cinnamic acid (CI) into 3-phenylpropionate-dihydrodiol (PP-dihydrodiol) and cinnamic acid-dihydrodiol (CI-dihydrodiol), respectively. In Escherichia coli O139:H28 (strain E24377A / ETEC), this protein is 3-phenylpropionate/cinnamic acid dioxygenase subunit beta.